The chain runs to 82 residues: M-zodatoxin-Lt3b (82 aa).

Residues 1–22 (MKTYAVLLALVVAFVCIAESTG) form the signal peptide. A propeptide spanning residues 23–61 (YPVEDLEDDELTELEAEALLEDLLEDLELEDLDYNEEAR) is cleaved from the precursor. The short motif at 58 to 61 (EEAR) is the Processing quadruplet motif element. Ala81 carries the alanine amide modification.

Post-translationally, cleavage of the propeptide depends on the processing quadruplet motif (XXXR, with at least one of X being E). As to expression, expressed by the venom gland.

It is found in the secreted. Its function is as follows. It has antimicrobial activity against Gram-positive bacteria (A.globiformis VKM Ac-1112 (MIC=0.7 uM), and B.subtilis VKM B-501 (MIC=2.9 uM)), Gram-negative bacteria (E.coli DH5-alpha (MIC=23 uM), E.coli MH1 (MIC=28 uM), and P.aeruginosa PAO1 (MIC&gt;45 uM)), and yeasts (P.pastoris GS115 (MIC=23 uM), and S.cerevisiae Y190 (MIC=23 uM)). Does not have hemolytic against rabbit erythrocytes. Causes paralysis, but is not lethal when injected into insect (M.domestica) larvae. The chain is M-zodatoxin-Lt3b from Lachesana tarabaevi (Spider).